The following is a 614-amino-acid chain: Putative amino acid transporter AAT1 (614 aa).

11 helical membrane-spanning segments follow: residues 184-216, 222-243, 255-275, 295-311, 318-340, 360-380, 401-417, 437-459, 531-547, 553-575, and 587-613; these read VLFLCTAIGVGLLSIPYVFSELGIILSIILILL, YITTNILCMSSLEHNIFVYGNL, LIDFGLTFSFLSGYVLVLILV, RIFITIVICLLVLPLTF, INCFLVFSLFSITLTVLAVGYQS, HFFKCFNILLFSFSQQSNACF, ILIQVIFYTLFGLLGYL, SILLCKFFLCISFFFSIPLNFIA, CAAIFVTCLCAFVEFNV, FIGIFGGFTSSIISCILPNLIYY, and RYATLALLCFFSVIGLISSIVTAFIII.

It belongs to the amino acid/polyamine transporter 2 family.

It localises to the vacuole membrane. Functionally, putative amino acid transporter. Involved in maintaining the osmotic homeostasis of the digestive vacuole. Important for the timely development and growth of the asexual-stage parasites and male gametocyte maturation. This Plasmodium berghei (strain Anka) protein is Putative amino acid transporter AAT1.